A 512-amino-acid polypeptide reads, in one-letter code: 2-isopropylmalate synthase (512 aa).

The 264-residue stretch at 5–268 (LIIFDTTLRD…DLGIATQHIL (264 aa)) folds into the Pyruvate carboxyltransferase domain. Asp14, His202, His204, and Asn239 together coordinate Mn(2+). The segment at 394–512 (GFVSLFQQSE…NKADRVAAQG (119 aa)) is regulatory domain.

It belongs to the alpha-IPM synthase/homocitrate synthase family. LeuA type 1 subfamily. Homodimer. Mn(2+) serves as cofactor.

The protein localises to the cytoplasm. It catalyses the reaction 3-methyl-2-oxobutanoate + acetyl-CoA + H2O = (2S)-2-isopropylmalate + CoA + H(+). It functions in the pathway amino-acid biosynthesis; L-leucine biosynthesis; L-leucine from 3-methyl-2-oxobutanoate: step 1/4. Its function is as follows. Catalyzes the condensation of the acetyl group of acetyl-CoA with 3-methyl-2-oxobutanoate (2-ketoisovalerate) to form 3-carboxy-3-hydroxy-4-methylpentanoate (2-isopropylmalate). The sequence is that of 2-isopropylmalate synthase from Verminephrobacter eiseniae (strain EF01-2).